We begin with the raw amino-acid sequence, 476 residues long: MYVFPKISLRPEVENYLKESFLNEEAVSASSRQEAERKFETLLLRLSHPPSMTTVRVNTHLGSVQHVRGLLLEELQKQFGESSIPVVQHPALPDVLLIPMTGPRKNIERQQGEVIVGAQCGNAVLRGAHVYVPGIVSASKFMKAGDVISVYSDINGKCKKGAKEFDGTKVFLGNGISELSRKDIFNGLPDLKGIGIRMTEPIYLSPSFDNVLPSYIFLQNLPSTVVAHVLDPQPGEKILDMCAAPGGKTTHTAALMQDKGEVIALDKILTKVNKLKQNASLLGLHSIRAFCFDATKALKLDTTDGIEGGPPFLPESFDRIILDAPCSGMGQRPNMACTWTLKEVTSYQPLQRKLLHVAVQLLKPGGVLVYSTCTITLAENEEQVAWALRTFPCLQLQPQEPQIGGEGMVGAGLTLEQLKQLQRFDPSVVPLQNMDTDSLGEARREDMIWLANKDCIGFFIAKFLKCQSTKAKVSQK.

A PUA domain is found at 111–203 (QGEVIVGAQC…IGIRMTEPIY (93 aa)). Residues 242 to 248 (CAAPGGK), aspartate 266, aspartate 293, and aspartate 323 contribute to the S-adenosyl-L-methionine site. Catalysis depends on cysteine 373, which acts as the Nucleophile. Lysine 419 bears the N6-acetyllysine mark.

Belongs to the class I-like SAM-binding methyltransferase superfamily. RsmB/NOP family.

It is found in the cytoplasm. The catalysed reaction is cytidine(72) in tRNA(Thr) + S-adenosyl-L-methionine = 5-methylcytidine(72) in tRNA(Thr) + S-adenosyl-L-homocysteine + H(+). The enzyme catalyses cytidine(72) in tRNA(Cys) + S-adenosyl-L-methionine = 5-methylcytidine(72) in tRNA(Cys) + S-adenosyl-L-homocysteine + H(+). In terms of biological role, S-adenosyl-L-methionine-dependent methyltransferase that specifically methylates the C5 position of cytosine 72 in tRNA(Thr)(TGT) and tRNA(Cys)(GCA). In vitro also methylates tRNA(Thr)(AGT). Methylation requires, in the acceptor stem region, the presence of the 3'-CCA terminus, the target site C72, the discriminator base U73, and the second and third base pairs (2:71 and 3:70) in the tRNA substrates. In Mus musculus (Mouse), this protein is tRNA (cytosine(72)-C(5))-methyltransferase NSUN6.